The following is a 113-amino-acid chain: uncharacterized protein (113 aa).

This is an uncharacterized protein from Haemophilus influenzae (strain ATCC 51907 / DSM 11121 / KW20 / Rd).